The following is a 586-amino-acid chain: Kelch-like protein 7 (586 aa).

The BTB domain occupies 44–111 (CDVILMVQER…AYTARISVNS (68 aa)). Residues 146–248 (CLGISVLAEC…SKNFLSKTVQ (103 aa)) enclose the BACK domain. Kelch repeat units lie at residues 294 to 336 (RIAL…FWDN), 337 to 382 (VVYI…AAEG), 383 to 430 (KIYT…EANG), 431 to 481 (LIYV…FVKD), 483 to 528 (IFAV…AVGS), and 530 to 575 (IYVL…CVVD).

Homodimer. Component of the BCR(KLHL7) E3 ubiquitin ligase complex, at least composed of CUL3 and KLHL7 and RBX1.

It localises to the nucleus. Its subcellular location is the cytoplasm. It participates in protein modification; protein ubiquitination. Functionally, substrate-specific adapter of a BCR (BTB-CUL3-RBX1) E3 ubiquitin ligase complex. The BCR(KLHL7) complex acts by mediating ubiquitination and subsequent degradation of substrate proteins. Probably mediates 'Lys-48'-linked ubiquitination. This Rattus norvegicus (Rat) protein is Kelch-like protein 7 (Klhl7).